Reading from the N-terminus, the 88-residue chain is MANTPSAKKAVRKIERRTAVNKSRRSQMRTYVRKVEEAIASGDREAATQALRAAEPLVMRAAQKGIVHKNTASRKVSRLSARVSSLGS.

The protein belongs to the bacterial ribosomal protein bS20 family.

Its function is as follows. Binds directly to 16S ribosomal RNA. This Methylocella silvestris (strain DSM 15510 / CIP 108128 / LMG 27833 / NCIMB 13906 / BL2) protein is Small ribosomal subunit protein bS20.